We begin with the raw amino-acid sequence, 622 residues long: MVPVENTEGPNLLNQKGREAETEGSCGASGGGHPACAGGPSMFTFLTSVTAAISGLLVGYELGLISGALLQIRTLLALTCHEQEMVVSSLLIGAFLASLTGGVLIDRYGRRLAIILSSCLLGLGSLVLIMSLSYTLLIMGRVAIGVSISLSSIATCVYIAEIAPQHRRGLLVSLNELMIVTGILFAYISNYAFANISNGWKYMFGLVIPLGVLQAIAMYFLPPSPRFLVMKGQEESAGKVLRKLRVISDTTEELTLIKSSLKDEYQYSFWDLFRSKDNMRTRILIGLTLVFFVQTTGQPNILFYASTVLKSVGFQSNEAASLASTGVGVVKVVSTIPATLLVDHIGSKTFLCIGSSVMSASLLTMGIVNLNINMNFTNICRSHSLLNQSLEEFVFYATGNLSISNSSLREHFKRITPYSKGSFMPMGNGMEPKGEMTFTSSLPNAGLSRTEHQGVTDTAVVPAAYKWLSLASLLVYVAAFSIGLGPMPWLVLSEIFPGGIRGRAMALTSSMNWGVNLLISLTFLTVTDLIGLSWVCFIYTIMSLASLAFVVLFIPETKGCSLEQISVELAKANYVKNNICFMSHHQEELVPTQLQKRKPQEQLPECNHLCGRGQSQRPSPDT.

A disordered region spans residues 1–26; that stretch reads MVPVENTEGPNLLNQKGREAETEGSC. Topologically, residues 1 to 44 are cytoplasmic; sequence MVPVENTEGPNLLNQKGREAETEGSCGASGGGHPACAGGPSMFT. Residues 45 to 65 form a helical membrane-spanning segment; sequence FLTSVTAAISGLLVGYELGLI. At 66–84 the chain is on the extracellular side; it reads SGALLQIRTLLALTCHEQE. Residues 85–105 traverse the membrane as a helical segment; sequence MVVSSLLIGAFLASLTGGVLI. The Cytoplasmic portion of the chain corresponds to 106–111; that stretch reads DRYGRR. A helical membrane pass occupies residues 112–132; sequence LAIILSSCLLGLGSLVLIMSL. The Extracellular portion of the chain corresponds to 133–141; it reads SYTLLIMGR. Residues 142 to 162 form a helical membrane-spanning segment; that stretch reads VAIGVSISLSSIATCVYIAEI. The Cytoplasmic portion of the chain corresponds to 163–168; sequence APQHRR. The helical transmembrane segment at 169-189 threads the bilayer; it reads GLLVSLNELMIVTGILFAYIS. The Extracellular portion of the chain corresponds to 190–201; the sequence is NYAFANISNGWK. Asparagine 195 carries N-linked (GlcNAc...) asparagine glycosylation. Residues 202 to 222 form a helical membrane-spanning segment; it reads YMFGLVIPLGVLQAIAMYFLP. Over 223 to 282 the chain is Cytoplasmic; the sequence is PSPRFLVMKGQEESAGKVLRKLRVISDTTEELTLIKSSLKDEYQYSFWDLFRSKDNMRTR. Residues 283–303 traverse the membrane as a helical segment; that stretch reads ILIGLTLVFFVQTTGQPNILF. At 304 to 321 the chain is on the extracellular side; the sequence is YASTVLKSVGFQSNEAAS. The chain crosses the membrane as a helical span at residues 322–342; the sequence is LASTGVGVVKVVSTIPATLLV. Over 343 to 349 the chain is Cytoplasmic; it reads DHIGSKT. Residues 350–370 traverse the membrane as a helical segment; the sequence is FLCIGSSVMSASLLTMGIVNL. The Extracellular portion of the chain corresponds to 371–471; that stretch reads NINMNFTNIC…PAAYKWLSLA (101 aa). Asparagine 375, asparagine 387, asparagine 400, and asparagine 405 each carry an N-linked (GlcNAc...) asparagine glycan. Residues 472–492 form a helical membrane-spanning segment; that stretch reads SLLVYVAAFSIGLGPMPWLVL. At 493–503 the chain is on the cytoplasmic side; sequence SEIFPGGIRGR. Residues 504–524 traverse the membrane as a helical segment; it reads AMALTSSMNWGVNLLISLTFL. At 525 to 533 the chain is on the extracellular side; sequence TVTDLIGLS. A helical membrane pass occupies residues 534–554; that stretch reads WVCFIYTIMSLASLAFVVLFI. The Cytoplasmic portion of the chain corresponds to 555 to 622; the sequence is PETKGCSLEQ…GQSQRPSPDT (68 aa).

Belongs to the major facilitator superfamily. Sugar transporter (TC 2.A.1.1) family. Glucose transporter subfamily. As to expression, expressed in skeletal muscle, heart, brain, kidney, spleen, adipose tissues and to a lesser extent in small intestine and lung.

It localises to the cell membrane. The protein resides in the endomembrane system. The protein localises to the cytoplasm. Its subcellular location is the perinuclear region. It carries out the reaction D-glucose(out) = D-glucose(in). Insulin-independent facilitative glucose transporter. The polypeptide is Solute carrier family 2, facilitated glucose transporter member 12 (Mus musculus (Mouse)).